A 125-amino-acid polypeptide reads, in one-letter code: Large ribosomal subunit protein eL31 (125 aa).

It belongs to the eukaryotic ribosomal protein eL31 family. Component of the large ribosomal subunit.

Its subcellular location is the cytoplasm. In terms of biological role, component of the large ribosomal subunit. The ribosome is a large ribonucleoprotein complex responsible for the synthesis of proteins in the cell. The sequence is that of Large ribosomal subunit protein eL31 (rpl31) from Xenopus laevis (African clawed frog).